The chain runs to 222 residues: Sugar fermentation stimulation protein homolog (222 aa).

This sequence belongs to the SfsA family.

The sequence is that of Sugar fermentation stimulation protein homolog from Thermotoga petrophila (strain ATCC BAA-488 / DSM 13995 / JCM 10881 / RKU-1).